A 307-amino-acid polypeptide reads, in one-letter code: Protoheme IX farnesyltransferase (307 aa).

Helical transmembrane passes span 31-51 (VTQL…PGMV), 55-75 (VLIG…AINC), 103-123 (TLVF…VYAN), 125-145 (LTMW…TILL), 153-173 (IVIG…AVAG), 179-199 (AWFL…ALAL), 223-243 (LLHI…PFVY), 246-266 (SGYI…AYAW), and 285-305 (ILYL…KFVP).

This sequence belongs to the UbiA prenyltransferase family. Protoheme IX farnesyltransferase subfamily.

Its subcellular location is the cell inner membrane. The enzyme catalyses heme b + (2E,6E)-farnesyl diphosphate + H2O = Fe(II)-heme o + diphosphate. It participates in porphyrin-containing compound metabolism; heme O biosynthesis; heme O from protoheme: step 1/1. In terms of biological role, converts heme B (protoheme IX) to heme O by substitution of the vinyl group on carbon 2 of heme B porphyrin ring with a hydroxyethyl farnesyl side group. In Cupriavidus necator (strain ATCC 17699 / DSM 428 / KCTC 22496 / NCIMB 10442 / H16 / Stanier 337) (Ralstonia eutropha), this protein is Protoheme IX farnesyltransferase.